A 1487-amino-acid polypeptide reads, in one-letter code: Major viral transcription factor ICP4 homolog (1487 aa).

Disordered regions lie at residues 41–295 (AAPD…LPPG), 310–370 (LAKT…AEEA), and 803–1007 (PPTR…HTPR). A compositionally biased stretch (pro residues) spans 66–75 (VIPPPSPAPE). Low complexity-rich tracts occupy residues 165-193 (PSSA…SSSS) and 201-213 (DGAG…SSSS). A compositionally biased stretch (acidic residues) spans 214 to 224 (DDSDSDEGGEE). Residues 235–272 (AAKTPSAAGSPGPSSGGDRPAAGAATPKSCRSGAASPG) are compositionally biased toward low complexity. Residues 273–285 (APAPAPASAPAPS) are compositionally biased toward pro residues. Low complexity-rich tracts occupy residues 807–829 (SQQP…AEGS), 849–860 (PSSHSQSPQHSQ), and 867–877 (ATTATCCRATQ). Over residues 878 to 893 (TNARSRGQQHQPQKAR) the composition is skewed to polar residues. Residues 920 to 929 (HGRPRGKSGK) are compositionally biased toward basic residues. Residues 938–951 (AAQAGASASFSSSA) are compositionally biased toward low complexity. Residues 988-1007 (GPDRRGGFRRVPRGDCHTPR) are compositionally biased toward basic and acidic residues.

This sequence belongs to the herpesviridae ICP4 family. A long stretch of serine residues may be a major site of phosphorylation.

It is found in the host nucleus. Functionally, this IE protein is a multifunctional protein capable of migrating to the nucleus, binding to DNA, trans-activating other viral genes, and autoregulating its own synthesis. This is Major viral transcription factor ICP4 homolog (IE) from Equus caballus (Horse).